The following is a 266-amino-acid chain: Energy-coupling factor transporter ATP-binding protein EcfA1 (266 aa).

One can recognise an ABC transporter domain in the interval 2–237 (IKLNNVTFRY…EKIIEIAKIA (236 aa)). 37–44 (GHNGSGKS) lines the ATP pocket.

The protein belongs to the ABC transporter superfamily. Energy-coupling factor EcfA family. As to quaternary structure, forms a stable energy-coupling factor (ECF) transporter complex composed of 2 membrane-embedded substrate-binding proteins (S component), 2 ATP-binding proteins (A component) and 2 transmembrane proteins (T component).

The protein resides in the cell membrane. Functionally, ATP-binding (A) component of a common energy-coupling factor (ECF) ABC-transporter complex. Unlike classic ABC transporters this ECF transporter provides the energy necessary to transport a number of different substrates. In Mycoplasmopsis synoviae (strain 53) (Mycoplasma synoviae), this protein is Energy-coupling factor transporter ATP-binding protein EcfA1.